A 258-amino-acid chain; its full sequence is Thiazole synthase (258 aa).

The active-site Schiff-base intermediate with DXP is lysine 98. Residues glycine 159, 185–186, and 207–208 contribute to the 1-deoxy-D-xylulose 5-phosphate site; these read AG and NT.

It belongs to the ThiG family. As to quaternary structure, homotetramer. Forms heterodimers with either ThiH or ThiS.

It localises to the cytoplasm. The enzyme catalyses [ThiS sulfur-carrier protein]-C-terminal-Gly-aminoethanethioate + 2-iminoacetate + 1-deoxy-D-xylulose 5-phosphate = [ThiS sulfur-carrier protein]-C-terminal Gly-Gly + 2-[(2R,5Z)-2-carboxy-4-methylthiazol-5(2H)-ylidene]ethyl phosphate + 2 H2O + H(+). It participates in cofactor biosynthesis; thiamine diphosphate biosynthesis. Functionally, catalyzes the rearrangement of 1-deoxy-D-xylulose 5-phosphate (DXP) to produce the thiazole phosphate moiety of thiamine. Sulfur is provided by the thiocarboxylate moiety of the carrier protein ThiS. In vitro, sulfur can be provided by H(2)S. The chain is Thiazole synthase from Cytophaga hutchinsonii (strain ATCC 33406 / DSM 1761 / CIP 103989 / NBRC 15051 / NCIMB 9469 / D465).